Reading from the N-terminus, the 585-residue chain is Archaeosine synthase (585 aa).

In terms of domain architecture, PUA spans 516 to 584; sequence TKTVEIDGFV…IGVEIRHVEE (69 aa).

The protein belongs to the archaeosine synthase type 1 family. In terms of assembly, homodimer.

The enzyme catalyses 7-cyano-7-carbaguanosine(15) in tRNA + L-glutamine + H2O = archaeosine(15) in tRNA + L-glutamate. It participates in tRNA modification; archaeosine-tRNA biosynthesis. Is responsible for the final step in the biosynthesis of archaeosine, a modified nucleoside present in the dihydrouridine loop (D-loop) of archaeal tRNA. Catalyzes the conversion of 7-cyano-7-deazaguanine (preQ0)-modified tRNA to archaeosine-tRNA, transforming a nitrile group to a formamidine group. The sequence is that of Archaeosine synthase from Haloferax volcanii (strain ATCC 29605 / DSM 3757 / JCM 8879 / NBRC 14742 / NCIMB 2012 / VKM B-1768 / DS2) (Halobacterium volcanii).